Here is a 108-residue protein sequence, read N- to C-terminus: UPF0145 protein LGAS_1099 (108 aa).

Belongs to the UPF0145 family.

The chain is UPF0145 protein LGAS_1099 from Lactobacillus gasseri (strain ATCC 33323 / DSM 20243 / BCRC 14619 / CIP 102991 / JCM 1131 / KCTC 3163 / NCIMB 11718 / NCTC 13722 / AM63).